A 503-amino-acid chain; its full sequence is Opine oxidase subunit A (503 aa).

The protein to T-protein and to dimethylglycine dehydrogenase. Heterodimer of a subunit A and a subunit B.

It participates in opine metabolism; octopine degradation. Its function is as follows. Oxidative cleavage of octopine into L-arginine and pyruvate. This chain is Opine oxidase subunit A (ooxA), found in Agrobacterium tumefaciens (strain Ach5).